A 498-amino-acid chain; its full sequence is Polyphosphate:AMP phosphotransferase (498 aa).

2 PPK2 regions span residues 11-234 (IDDD…MQAA) and 269-491 (LSKE…LEKA).

The protein belongs to the polyphosphate kinase 2 (PPK2) family. Class II subfamily.

It catalyses the reaction [phosphate](n) + ADP = [phosphate](n+1) + AMP. Its function is as follows. Uses inorganic polyphosphate (polyP) as a donor to convert AMP to ADP. Can also convert GMP to GDP, with lower efficiency. In Pseudomonas syringae pv. tomato (strain ATCC BAA-871 / DC3000), this protein is Polyphosphate:AMP phosphotransferase.